A 248-amino-acid polypeptide reads, in one-letter code: Triosephosphate isomerase (248 aa).

Positions 12 and 14 each coordinate substrate. The interval 16 to 30 is igE-binding; it reads NGDRAGIDSIISFMK. Catalysis depends on H95, which acts as the Electrophile. E165 functions as the Proton acceptor in the catalytic mechanism. IgE-binding regions lie at residues 166–180 and 205–219; these read PVWA…TPEQ and RIIY…NCKE.

The protein belongs to the triosephosphate isomerase family. In terms of assembly, homodimer. In terms of tissue distribution, expressed in skeletal muscle (at protein level).

It localises to the cytoplasm. It catalyses the reaction D-glyceraldehyde 3-phosphate = dihydroxyacetone phosphate. The enzyme catalyses dihydroxyacetone phosphate = methylglyoxal + phosphate. Its pathway is carbohydrate biosynthesis; gluconeogenesis. It participates in carbohydrate degradation; glycolysis; D-glyceraldehyde 3-phosphate from glycerone phosphate: step 1/1. In terms of biological role, triosephosphate isomerase is an extremely efficient metabolic enzyme that catalyzes the interconversion between dihydroxyacetone phosphate (DHAP) and D-glyceraldehyde-3-phosphate (G3P) in glycolysis and gluconeogenesis. It is also responsible for the non-negligible production of methylglyoxal a reactive cytotoxic side-product that modifies and can alter proteins, DNA and lipids. This Procambarus clarkii (Red swamp crayfish) protein is Triosephosphate isomerase.